Reading from the N-terminus, the 358-residue chain is MATAIRSGRIGGWERFCQWVTDTNNRIYVGWFGVLMIPCLLAATTCFIVAFIAAPAVDIDGIREPVAGSLIYGNNIISGAVVPSSNAIGLHFYPIWEAASLDEWLYNGGPYQLVVFHFLIGISAYMGRQWELSYRLGMRPWICVAYSAPLSAAFAVFLVYPFGQGSFSDGMPLGISGTFNFMLVFQAEHNILMHPFHMLGVAGVFGGSLFSAMHGSLVTSSLVRETTEAESQNYGYKFGQEEETYNIVAAHGYFGRLIFQYASFNNSRSLHFFLAAWPVVGIWFTSMGISTMAFNLNGFNFNQSVLDAQGRVLNTWADVLNRANLGMEVMHERNAHNFPLDLAATESTPVALQAPTIG.

3 consecutive transmembrane segments (helical) span residues 28-45 (YVGW…AATT), 117-132 (HFLI…QWEL), and 141-155 (WICV…AAFA). Histidine 117 contacts chlorophyll a. Tyrosine 125 contributes to the pheophytin a binding site. Aspartate 169 and glutamate 188 together coordinate [CaMn4O5] cluster. The helical transmembrane segment at 196 to 217 (FHMLGVAGVFGGSLFSAMHGSL) threads the bilayer. Position 197 (histidine 197) interacts with chlorophyll a. A quinone-binding positions include histidine 214 and 263-264 (SF). Histidine 214 is a Fe cation binding site. Residue histidine 271 coordinates Fe cation. The chain crosses the membrane as a helical span at residues 273 to 287 (FLAAWPVVGIWFTSM). [CaMn4O5] cluster-binding residues include histidine 331, glutamate 332, aspartate 341, and alanine 343. Residues 344 to 358 (ATESTPVALQAPTIG) constitute a propeptide that is removed on maturation.

It belongs to the reaction center PufL/M/PsbA/D family. As to quaternary structure, PSII is composed of 1 copy each of membrane proteins PsbA, PsbB, PsbC, PsbD, PsbE, PsbF, PsbH, PsbI, PsbJ, PsbK, PsbL, PsbM, PsbT, PsbX, PsbY, PsbZ, Psb30/Ycf12, peripheral proteins PsbO, CyanoQ (PsbQ), PsbU, PsbV and a large number of cofactors. It forms dimeric complexes. Requires The D1/D2 heterodimer binds P680, chlorophylls that are the primary electron donor of PSII, and subsequent electron acceptors. It shares a non-heme iron and each subunit binds pheophytin, quinone, additional chlorophylls, carotenoids and lipids. D1 provides most of the ligands for the Mn4-Ca-O5 cluster of the oxygen-evolving complex (OEC). There is also a Cl(-1) ion associated with D1 and D2, which is required for oxygen evolution. The PSII complex binds additional chlorophylls, carotenoids and specific lipids. as cofactor. Post-translationally, tyr-160 forms a radical intermediate that is referred to as redox-active TyrZ, YZ or Y-Z. C-terminally processed by CtpA; processing is essential to allow assembly of the oxygen-evolving complex and thus photosynthetic growth.

It localises to the cellular thylakoid membrane. The enzyme catalyses 2 a plastoquinone + 4 hnu + 2 H2O = 2 a plastoquinol + O2. Photosystem II (PSII) is a light-driven water:plastoquinone oxidoreductase that uses light energy to abstract electrons from H(2)O, generating O(2) and a proton gradient subsequently used for ATP formation. It consists of a core antenna complex that captures photons, and an electron transfer chain that converts photonic excitation into a charge separation. The D1/D2 (PsbA/PsbD) reaction center heterodimer binds P680, the primary electron donor of PSII as well as several subsequent electron acceptors. The polypeptide is Photosystem II protein D1 2 (Synechococcus sp. (strain WH7803)).